A 408-amino-acid chain; its full sequence is uncharacterized protein (408 aa).

Disordered stretches follow at residues 184 to 206 (DENN…SILF) and 254 to 317 (NNKT…SSDS). Low complexity predominate over residues 187–206 (NNNSNNNNNNNSNNNSSILF).

This is an uncharacterized protein from Dictyostelium discoideum (Social amoeba).